We begin with the raw amino-acid sequence, 90 residues long: Elongation factor 1-beta (90 aa).

It belongs to the EF-1-beta/EF-1-delta family.

Functionally, promotes the exchange of GDP for GTP in EF-1-alpha/GDP, thus allowing the regeneration of EF-1-alpha/GTP that could then be used to form the ternary complex EF-1-alpha/GTP/AAtRNA. The polypeptide is Elongation factor 1-beta (Sulfolobus acidocaldarius (strain ATCC 33909 / DSM 639 / JCM 8929 / NBRC 15157 / NCIMB 11770)).